Reading from the N-terminus, the 192-residue chain is uncharacterized protein (192 aa).

The 132-residue stretch at 29 to 160 folds into the Nudix hydrolase domain; that stretch reads QRQAAVLIPV…PLDVYRRGNS (132 aa). A Nudix box motif is present at residues 67–89; it reads GAVDSTDASLIAAALREAQEEVA. The Mg(2+) site is built by glutamate 83 and glutamate 87.

It belongs to the Nudix hydrolase family. PCD1 subfamily. The cofactor is Mn(2+). Mg(2+) is required as a cofactor.

Functionally, probably mediates the hydrolysis of some nucleoside diphosphate derivatives. This is an uncharacterized protein from Salmonella dublin (strain CT_02021853).